The following is a 501-amino-acid chain: L-aspartate decarboxylase dtxS4 (501 aa).

Residue 106 to 108 coordinates substrate; that stretch reads KLT. Lys-320 bears the N6-(pyridoxal phosphate)lysine mark. A substrate-binding site is contributed by Arg-474.

This sequence belongs to the group II decarboxylase family. The cofactor is pyridoxal 5'-phosphate.

It catalyses the reaction L-aspartate + H(+) = beta-alanine + CO2. It participates in secondary metabolite biosynthesis. Its function is as follows. L-aspartate decarboxylase; part of the gene cluster that mediates the biosynthesis of destruxins, insecticidal cyclic hexadepsipeptides which induce flaccid paralysis and visceral muscle contraction in insects through targeting the calcium channels and vacuolar-type ATPases. The aldo-keto reductase dtxS3 converts alpha-ketoisocaproic acid from deaminated leucine into alpha-hydroxyisocaproic acid (HIC), which is the first substrate for destruxin assembly by dtxS1. L-aspartate decarboxylase dtxS4 converts aspartic acid into beta-alanine, the last substrate for the destruxin assembly line performed by dtxS1. The nonribosomal peptide synthetase dtxS1 synthesizes destruxins B and B2, whereas the cytochrome P450 monooxygenase dtxS2 is required to convert destruxin B into other destruxin derivatives, including destructins C, D, A and E. Destruxin E-diol (ED) is further produced in a non-enzymatic manner from destruxin E. Destruxins play an important role in virulence and escape from insect host immune defenses. The sequence is that of L-aspartate decarboxylase dtxS4 from Metarhizium robertsii (strain ARSEF 23 / ATCC MYA-3075) (Metarhizium anisopliae (strain ARSEF 23)).